A 35-amino-acid chain; its full sequence is Photosystem II reaction center protein T (35 aa).

A helical membrane pass occupies residues A3–F23.

It belongs to the PsbT family. PSII is composed of 1 copy each of membrane proteins PsbA, PsbB, PsbC, PsbD, PsbE, PsbF, PsbH, PsbI, PsbJ, PsbK, PsbL, PsbM, PsbT, PsbY, PsbZ, Psb30/Ycf12, at least 3 peripheral proteins of the oxygen-evolving complex and a large number of cofactors. It forms dimeric complexes.

It localises to the plastid. The protein localises to the chloroplast thylakoid membrane. Its function is as follows. Found at the monomer-monomer interface of the photosystem II (PS II) dimer, plays a role in assembly and dimerization of PSII. PSII is a light-driven water plastoquinone oxidoreductase, using light energy to abstract electrons from H(2)O, generating a proton gradient subsequently used for ATP formation. This Welwitschia mirabilis (Tree tumbo) protein is Photosystem II reaction center protein T.